We begin with the raw amino-acid sequence, 96 residues long: Large ribosomal subunit protein eL21 (96 aa).

Belongs to the eukaryotic ribosomal protein eL21 family.

The chain is Large ribosomal subunit protein eL21 from Methanothrix thermoacetophila (strain DSM 6194 / JCM 14653 / NBRC 101360 / PT) (Methanosaeta thermophila).